The primary structure comprises 2919 residues: Cadherin EGF LAG seven-pass G-type receptor 2 (2919 aa).

A signal peptide spans M1 to G31. Topologically, residues D32–T2380 are extracellular. Positions L156 to Q194 are disordered. Residues V175–Q194 show a composition bias toward polar residues. Cadherin domains follow at residues Q182–F289, E290–F399, S400–F505, V506–F610, T611–F712, Q713–F815, L816–F921, E922–L1023, and I1028–L1146. N-linked (GlcNAc...) asparagine glycosylation is found at N486, N557, and N701. N-linked (GlcNAc...) asparagine glycans are attached at residues N1036, N1076, N1182, and N1212. Residues D1228–E1286 form the EGF-like 1; atypical domain. Positions E1288–Y1318 constitute an EGF-like 2; calcium-binding domain. 6 disulfide bridges follow: C1292/C1303, C1297/C1312, C1314/C1323, C1332/C1343, C1337/C1353, and C1355/C1365. The EGF-like 3; calcium-binding domain maps to H1328–Q1366. One can recognise a Laminin G-like 1 domain in the interval V1367–C1571. N1501 and N1565 each carry an N-linked (GlcNAc...) asparagine glycan. Disulfide bonds link C1545–C1571, C1578–C1589, C1583–C1598, and C1600–C1609. The EGF-like 4; calcium-binding domain occupies K1574–A1610. At N1591 the chain carries (3R)-3-hydroxyasparagine. The region spanning A1614 to C1791 is the Laminin G-like 2 domain. N-linked (GlcNAc...) asparagine glycosylation is present at N1741. In terms of domain architecture, EGF-like 5; calcium-binding spans V1787–T1829. 13 disulfide bridges follow: C1791–C1802, C1797–C1817, C1819–C1828, C1832–C1843, C1837–C1855, C1857–C1866, C1887–C1899, C1889–C1906, C1908–C1921, C1924–C1936, C1926–C1943, C1945–C1954, and C1957–C1969. An N-linked (GlcNAc...) asparagine glycan is attached at N1827. An EGF-like 6; calcium-binding domain is found at N1830–E1867. The 40-residue stretch at T1883–L1922 folds into the EGF-like 7; calcium-binding domain. N-linked (GlcNAc...) asparagine glycosylation occurs at N1900. Positions C1924–V1971 constitute a Laminin EGF-like domain. N-linked (GlcNAc...) asparagine glycans are attached at residues N2024, N2043, and N2061. The GAIN-B domain maps to E2199–E2369. A disordered region spans residues V2216–S2241. Disulfide bonds link C2319-C2351 and C2339-C2353. Residues C2319–E2369 are GPS. 2 N-linked (GlcNAc...) asparagine glycosylation sites follow: N2323 and N2345. The helical transmembrane segment at Y2381–L2401 threads the bilayer. At R2402–R2413 the chain is on the cytoplasmic side. The helical transmembrane segment at N2414–A2433 threads the bilayer. Residues D2434–A2438 are Extracellular-facing. The chain crosses the membrane as a helical span at residues C2439–L2459. Over E2460–R2480 the chain is Cytoplasmic. A helical membrane pass occupies residues F2481–D2501. Over P2502–T2518 the chain is Extracellular. The chain crosses the membrane as a helical span at residues L2519–I2539. Over L2540–R2563 the chain is Cytoplasmic. Residues S2564 to N2584 form a helical membrane-spanning segment. The Extracellular segment spans residues S2585–H2591. The chain crosses the membrane as a helical span at residues Y2592–L2612. At S2613–H2919 the chain is on the cytoplasmic side. Positions L2690–L2884 are disordered. Acidic residues predominate over residues T2718–Q2730. Residues G2791–S2800 are compositionally biased toward polar residues. Residues L2803–T2815 show a composition bias toward basic and acidic residues. A compositionally biased stretch (low complexity) spans G2857–E2868.

This sequence belongs to the G-protein coupled receptor 2 family. LN-TM7 subfamily. In terms of assembly, heterodimer of 2 chains generated by proteolytic processing; the large extracellular N-terminal fragment and the membrane-bound C-terminal fragment predominantly remain associated and non-covalently linked. The iron and 2-oxoglutarate dependent 3-hydroxylation of aspartate and asparagine is (R) stereospecific within EGF domains. In terms of processing, autoproteolytically processed at the GPS region of the GAIN-B domain; this cleavage modulates receptor activity. As to expression, expressed in the CNS and in the eye.

The protein localises to the cell membrane. Its function is as follows. Receptor that may have an important role in cell/cell signaling during nervous system formation. This is Cadherin EGF LAG seven-pass G-type receptor 2 from Mus musculus (Mouse).